The following is a 200-amino-acid chain: 3-isopropylmalate dehydratase small subunit (200 aa).

Belongs to the LeuD family. LeuD type 1 subfamily. As to quaternary structure, heterodimer of LeuC and LeuD.

The catalysed reaction is (2R,3S)-3-isopropylmalate = (2S)-2-isopropylmalate. The protein operates within amino-acid biosynthesis; L-leucine biosynthesis; L-leucine from 3-methyl-2-oxobutanoate: step 2/4. In terms of biological role, catalyzes the isomerization between 2-isopropylmalate and 3-isopropylmalate, via the formation of 2-isopropylmaleate. In Yersinia pseudotuberculosis serotype O:1b (strain IP 31758), this protein is 3-isopropylmalate dehydratase small subunit.